The sequence spans 501 residues: Lysine--tRNA ligase (501 aa).

Mg(2+)-binding residues include Glu410 and Glu417.

It belongs to the class-II aminoacyl-tRNA synthetase family. As to quaternary structure, homodimer. Mg(2+) is required as a cofactor.

It is found in the cytoplasm. The enzyme catalyses tRNA(Lys) + L-lysine + ATP = L-lysyl-tRNA(Lys) + AMP + diphosphate. The sequence is that of Lysine--tRNA ligase from Shewanella pealeana (strain ATCC 700345 / ANG-SQ1).